The primary structure comprises 108 residues: Mitochondrial pyruvate carrier 3 (108 aa).

3 helical membrane-spanning segments follow: residues 19 to 35 (IHFWAPTFKWGISIANI), 51 to 67 (IVITGTGLVWSRYSTVI), and 74 to 90 (LFSVSLGMAVTGIYQLT).

The protein belongs to the mitochondrial pyruvate carrier (MPC) (TC 2.A.105) family. Abundant in leaf and particularly in the guard cells.

It is found in the mitochondrion. It localises to the mitochondrion inner membrane. Its function is as follows. Mediates the uptake of pyruvate into mitochondria. Negatively regulates ABA-induced guard cell signaling and mediates drought stress responses. The chain is Mitochondrial pyruvate carrier 3 from Arabidopsis thaliana (Mouse-ear cress).